Reading from the N-terminus, the 139-residue chain is Nucleoside diphosphate kinase (139 aa).

Positions 10, 58, 86, 92, 103, and 113 each coordinate ATP. The Pros-phosphohistidine intermediate role is filled by His-116.

It belongs to the NDK family. In terms of assembly, homotetramer. Mg(2+) is required as a cofactor.

The protein resides in the cytoplasm. It carries out the reaction a 2'-deoxyribonucleoside 5'-diphosphate + ATP = a 2'-deoxyribonucleoside 5'-triphosphate + ADP. The enzyme catalyses a ribonucleoside 5'-diphosphate + ATP = a ribonucleoside 5'-triphosphate + ADP. Functionally, major role in the synthesis of nucleoside triphosphates other than ATP. The ATP gamma phosphate is transferred to the NDP beta phosphate via a ping-pong mechanism, using a phosphorylated active-site intermediate. This chain is Nucleoside diphosphate kinase, found in Caulobacter vibrioides (strain ATCC 19089 / CIP 103742 / CB 15) (Caulobacter crescentus).